We begin with the raw amino-acid sequence, 452 residues long: Phosphoglucosamine mutase 2 (452 aa).

Ser-101 (phosphoserine intermediate) is an active-site residue. Residues Ser-101, Asp-245, Asp-247, and Asp-249 each contribute to the Mg(2+) site. At Ser-101 the chain carries Phosphoserine.

This sequence belongs to the phosphohexose mutase family. It depends on Mg(2+) as a cofactor. Activated by phosphorylation.

The enzyme catalyses alpha-D-glucosamine 1-phosphate = D-glucosamine 6-phosphate. In terms of biological role, catalyzes the conversion of glucosamine-6-phosphate to glucosamine-1-phosphate. The protein is Phosphoglucosamine mutase 2 of Shewanella amazonensis (strain ATCC BAA-1098 / SB2B).